We begin with the raw amino-acid sequence, 57 residues long: Large ribosomal subunit protein bL33 (57 aa).

Belongs to the bacterial ribosomal protein bL33 family.

This is Large ribosomal subunit protein bL33 from Bifidobacterium longum (strain NCC 2705).